A 42-amino-acid chain; its full sequence is Gastric inhibitory polypeptide (42 aa).

Belongs to the glucagon family.

The protein resides in the secreted. Functionally, potent stimulator of insulin secretion and relatively poor inhibitor of gastric acid secretion. This Bos taurus (Bovine) protein is Gastric inhibitory polypeptide (GIP).